The following is a 49-amino-acid chain: Large ribosomal subunit protein bL33 (49 aa).

The protein belongs to the bacterial ribosomal protein bL33 family.

The chain is Large ribosomal subunit protein bL33 from Lactiplantibacillus plantarum (strain ATCC BAA-793 / NCIMB 8826 / WCFS1) (Lactobacillus plantarum).